The following is a 379-amino-acid chain: ATP phosphoribosyltransferase regulatory subunit (379 aa).

The protein belongs to the class-II aminoacyl-tRNA synthetase family. HisZ subfamily. In terms of assembly, heteromultimer composed of HisG and HisZ subunits.

Its subcellular location is the cytoplasm. It participates in amino-acid biosynthesis; L-histidine biosynthesis; L-histidine from 5-phospho-alpha-D-ribose 1-diphosphate: step 1/9. Its function is as follows. Required for the first step of histidine biosynthesis. May allow the feedback regulation of ATP phosphoribosyltransferase activity by histidine. In Sinorhizobium fredii (strain NBRC 101917 / NGR234), this protein is ATP phosphoribosyltransferase regulatory subunit.